A 255-amino-acid chain; its full sequence is MSIKVIVAGFKGRMGSTAVEMVKGDDELTLAALLDPFAAEKEVDGVPVFTDKADLVGFDADVWVDFTIPAVAYENTRFALENGFAPVVGTTGFTEAQIQKLTDLSKDKSIGGLIAPNFAIGAILLMKFAAEASKYFPDLEIIELHHDKKKDAPSGTAVKTAELIREVRESKRQGAEDEMETLAGARGAEFDGFRIHSVRLPGLVAHQEVIFGAQGEGLTLRHDSYDRISFMSGVNLGIKEVVKRDQLVYGLEHLL.

NAD(+) is bound by residues 9–14 (GFKGRM), 89–91 (GTT), and 115–118 (APNF). The Proton donor/acceptor role is filled by H145. Residue H146 participates in (S)-2,3,4,5-tetrahydrodipicolinate binding. K149 serves as the catalytic Proton donor. 155–156 (GT) serves as a coordination point for (S)-2,3,4,5-tetrahydrodipicolinate.

This sequence belongs to the DapB family.

The protein resides in the cytoplasm. The enzyme catalyses (S)-2,3,4,5-tetrahydrodipicolinate + NAD(+) + H2O = (2S,4S)-4-hydroxy-2,3,4,5-tetrahydrodipicolinate + NADH + H(+). It carries out the reaction (S)-2,3,4,5-tetrahydrodipicolinate + NADP(+) + H2O = (2S,4S)-4-hydroxy-2,3,4,5-tetrahydrodipicolinate + NADPH + H(+). The protein operates within amino-acid biosynthesis; L-lysine biosynthesis via DAP pathway; (S)-tetrahydrodipicolinate from L-aspartate: step 4/4. Catalyzes the conversion of 4-hydroxy-tetrahydrodipicolinate (HTPA) to tetrahydrodipicolinate. This chain is 4-hydroxy-tetrahydrodipicolinate reductase, found in Streptococcus thermophilus (strain CNRZ 1066).